A 124-amino-acid polypeptide reads, in one-letter code: Large ribosomal subunit protein bL12 (124 aa).

The protein belongs to the bacterial ribosomal protein bL12 family. As to quaternary structure, homodimer. Part of the ribosomal stalk of the 50S ribosomal subunit. Forms a multimeric L10(L12)X complex, where L10 forms an elongated spine to which 2 to 4 L12 dimers bind in a sequential fashion. Binds GTP-bound translation factors.

In terms of biological role, forms part of the ribosomal stalk which helps the ribosome interact with GTP-bound translation factors. Is thus essential for accurate translation. This chain is Large ribosomal subunit protein bL12, found in Ralstonia nicotianae (strain ATCC BAA-1114 / GMI1000) (Ralstonia solanacearum).